The sequence spans 51 residues: uncharacterized protein (51 aa).

This is an uncharacterized protein from Escherichia coli (strain K12).